Consider the following 648-residue polypeptide: Transmembrane 9 superfamily member 8 (648 aa).

The signal sequence occupies residues Met1–Ser33. At Phe34–His285 the chain is on the lumenal side. A helical membrane pass occupies residues Trp286 to Ile306. Over Met307–Gly355 the chain is Cytoplasmic. Residues Thr356 to Leu376 form a helical membrane-spanning segment. Over Ser377–Arg381 the chain is Lumenal. A helical membrane pass occupies residues Gly382–Ala402. At Ser403–Thr422 the chain is on the cytoplasmic side. A helical transmembrane segment spans residues Ala423–Gly443. Over Gln444 to Met455 the chain is Lumenal. A helical membrane pass occupies residues Phe456–Ile476. Topologically, residues Gly477–Val506 are cytoplasmic. Residues Phe507 to Ile527 form a helical membrane-spanning segment. At Leu528–Tyr538 the chain is on the lumenal side. The chain crosses the membrane as a helical span at residues Ile539–Val559. The Cytoplasmic segment spans residues Val560–Ser577. Residues Tyr578–Thr598 traverse the membrane as a helical segment. Residues Lys599–Lys604 are Lumenal-facing. The helical transmembrane segment at Leu605–Leu625 threads the bilayer. At Thr626–Asp648 the chain is on the cytoplasmic side. The Endoplasmic reticulum export signal motif lies at Phe637 to Tyr642. Residues Lys646–Asp648 carry the Golgi retention signal motif.

Belongs to the nonaspanin (TM9SF) (TC 9.A.2) family.

Its subcellular location is the endosome membrane. The protein resides in the golgi apparatus membrane. This is Transmembrane 9 superfamily member 8 from Arabidopsis thaliana (Mouse-ear cress).